A 132-amino-acid polypeptide reads, in one-letter code: Small ribosomal subunit protein uS8 (132 aa).

Belongs to the universal ribosomal protein uS8 family. As to quaternary structure, part of the 30S ribosomal subunit. Contacts proteins S5 and S12.

In terms of biological role, one of the primary rRNA binding proteins, it binds directly to 16S rRNA central domain where it helps coordinate assembly of the platform of the 30S subunit. This is Small ribosomal subunit protein uS8 from Granulibacter bethesdensis (strain ATCC BAA-1260 / CGDNIH1).